We begin with the raw amino-acid sequence, 309 residues long: 4-hydroxy-3-methylbut-2-enyl diphosphate reductase (309 aa).

Cys12 contacts [4Fe-4S] cluster. The (2E)-4-hydroxy-3-methylbut-2-enyl diphosphate site is built by His41 and His74. Dimethylallyl diphosphate is bound by residues His41 and His74. Positions 41 and 74 each coordinate isopentenyl diphosphate. Residue Cys96 participates in [4Fe-4S] cluster binding. His124 contacts (2E)-4-hydroxy-3-methylbut-2-enyl diphosphate. A dimethylallyl diphosphate-binding site is contributed by His124. His124 provides a ligand contact to isopentenyl diphosphate. Glu126 acts as the Proton donor in catalysis. Residue Thr167 coordinates (2E)-4-hydroxy-3-methylbut-2-enyl diphosphate. Cys197 lines the [4Fe-4S] cluster pocket. (2E)-4-hydroxy-3-methylbut-2-enyl diphosphate is bound by residues Ser225, Ser226, Asn227, and Ser269. Residues Ser225, Ser226, Asn227, and Ser269 each coordinate dimethylallyl diphosphate. 4 residues coordinate isopentenyl diphosphate: Ser225, Ser226, Asn227, and Ser269.

This sequence belongs to the IspH family. [4Fe-4S] cluster serves as cofactor.

The enzyme catalyses isopentenyl diphosphate + 2 oxidized [2Fe-2S]-[ferredoxin] + H2O = (2E)-4-hydroxy-3-methylbut-2-enyl diphosphate + 2 reduced [2Fe-2S]-[ferredoxin] + 2 H(+). It carries out the reaction dimethylallyl diphosphate + 2 oxidized [2Fe-2S]-[ferredoxin] + H2O = (2E)-4-hydroxy-3-methylbut-2-enyl diphosphate + 2 reduced [2Fe-2S]-[ferredoxin] + 2 H(+). It participates in isoprenoid biosynthesis; dimethylallyl diphosphate biosynthesis; dimethylallyl diphosphate from (2E)-4-hydroxy-3-methylbutenyl diphosphate: step 1/1. The protein operates within isoprenoid biosynthesis; isopentenyl diphosphate biosynthesis via DXP pathway; isopentenyl diphosphate from 1-deoxy-D-xylulose 5-phosphate: step 6/6. Its function is as follows. Catalyzes the conversion of 1-hydroxy-2-methyl-2-(E)-butenyl 4-diphosphate (HMBPP) into a mixture of isopentenyl diphosphate (IPP) and dimethylallyl diphosphate (DMAPP). Acts in the terminal step of the DOXP/MEP pathway for isoprenoid precursor biosynthesis. This is 4-hydroxy-3-methylbut-2-enyl diphosphate reductase from Shewanella pealeana (strain ATCC 700345 / ANG-SQ1).